Consider the following 279-residue polypeptide: 2-dehydropantoate 2-reductase (279 aa).

NADP(+) is bound by residues 6–11 (GLGAVG), lysine 66, and asparagine 86. Catalysis depends on lysine 158, which acts as the Proton donor. Residues lysine 158, asparagine 162, asparagine 166, asparagine 176, and 225-228 (NLSS) each bind substrate. Glutamate 240 lines the NADP(+) pocket.

Belongs to the ketopantoate reductase family.

It localises to the cytoplasm. The catalysed reaction is (R)-pantoate + NAD(+) = 2-dehydropantoate + NADH + H(+). It carries out the reaction (R)-pantoate + NADP(+) = 2-dehydropantoate + NADPH + H(+). It participates in cofactor biosynthesis; coenzyme A biosynthesis. In terms of biological role, catalyzes the NAD(P)H-dependent reduction of ketopantoate into pantoic acid. The sequence is that of 2-dehydropantoate 2-reductase from Pyrobaculum aerophilum (strain ATCC 51768 / DSM 7523 / JCM 9630 / CIP 104966 / NBRC 100827 / IM2).